The sequence spans 486 residues: N-succinylglutamate 5-semialdehyde dehydrogenase (486 aa).

220-225 serves as a coordination point for NAD(+); sequence GSSRTG. Residues Glu243 and Cys277 contribute to the active site.

It belongs to the aldehyde dehydrogenase family. AstD subfamily.

It catalyses the reaction N-succinyl-L-glutamate 5-semialdehyde + NAD(+) + H2O = N-succinyl-L-glutamate + NADH + 2 H(+). Its pathway is amino-acid degradation; L-arginine degradation via AST pathway; L-glutamate and succinate from L-arginine: step 4/5. In terms of biological role, catalyzes the NAD-dependent reduction of succinylglutamate semialdehyde into succinylglutamate. The chain is N-succinylglutamate 5-semialdehyde dehydrogenase from Shewanella baltica (strain OS155 / ATCC BAA-1091).